Here is a 1073-residue protein sequence, read N- to C-terminus: Lon protease homolog, mitochondrial (1073 aa).

Residues 1 to 27 (MIKASKCNKARALFLVRTSIPRTFIRN) constitute a mitochondrion transit peptide. Basic and acidic residues-rich tracts occupy residues 69–107 (FDSK…RKDI) and 113–123 (YDIKEETDSKP). The interval 69-173 (FDSKKEKQPS…DKEFLSPSDA (105 aa)) is disordered. A compositionally biased stretch (low complexity) spans 132 to 150 (SSKSSISSSSGGANNNNNN). Positions 158-167 (DDGSPKDKEF) are enriched in basic and acidic residues. A Lon N-terminal domain is found at 177–395 (PPFLAIAMKD…LSLQLLQVEA (219 aa)). 543–550 (GPPGTGKT) contacts ATP. Residues 775 to 785 (SVISDKAKKDA) show a composition bias toward basic and acidic residues. The segment at 775–821 (SVISDKAKKDAGSSSIESNDSNTEAKVSTTTENEKKQEQKQKQDEEI) is disordered. Residues 790–805 (IESNDSNTEAKVSTTT) are compositionally biased toward polar residues. The span at 806 to 821 (ENEKKQEQKQKQDEEI) shows a compositional bias: basic and acidic residues. In terms of domain architecture, Lon proteolytic spans 856 to 1044 (TLNPGVATGL…SEVFEHLFKG (189 aa)). Catalysis depends on residues Ser950 and Lys993.

The protein belongs to the peptidase S16 family. Homohexamer or homoheptamer. Organized in a ring with a central cavity.

The protein localises to the mitochondrion matrix. It carries out the reaction Hydrolysis of proteins in presence of ATP.. In terms of biological role, ATP-dependent serine protease that mediates the selective degradation of misfolded, unassembled or oxidatively damaged polypeptides as well as certain short-lived regulatory proteins in the mitochondrial matrix. May also have a chaperone function in the assembly of inner membrane protein complexes. Participates in the regulation of mitochondrial gene expression and in the maintenance of the integrity of the mitochondrial genome. Binds to mitochondrial DNA in a site-specific manner. In Candida dubliniensis (strain CD36 / ATCC MYA-646 / CBS 7987 / NCPF 3949 / NRRL Y-17841) (Yeast), this protein is Lon protease homolog, mitochondrial.